The primary structure comprises 217 residues: Imidazole glycerol phosphate synthase subunit HisH (217 aa).

The 215-residue stretch at 3–217 (TIAIVDYGVG…LYRNFVHWNP (215 aa)) folds into the Glutamine amidotransferase type-1 domain. The active-site Nucleophile is the C82. Active-site residues include H197 and E199.

As to quaternary structure, heterodimer of HisH and HisF.

It localises to the cytoplasm. The enzyme catalyses 5-[(5-phospho-1-deoxy-D-ribulos-1-ylimino)methylamino]-1-(5-phospho-beta-D-ribosyl)imidazole-4-carboxamide + L-glutamine = D-erythro-1-(imidazol-4-yl)glycerol 3-phosphate + 5-amino-1-(5-phospho-beta-D-ribosyl)imidazole-4-carboxamide + L-glutamate + H(+). It catalyses the reaction L-glutamine + H2O = L-glutamate + NH4(+). It functions in the pathway amino-acid biosynthesis; L-histidine biosynthesis; L-histidine from 5-phospho-alpha-D-ribose 1-diphosphate: step 5/9. Functionally, IGPS catalyzes the conversion of PRFAR and glutamine to IGP, AICAR and glutamate. The HisH subunit catalyzes the hydrolysis of glutamine to glutamate and ammonia as part of the synthesis of IGP and AICAR. The resulting ammonia molecule is channeled to the active site of HisF. The protein is Imidazole glycerol phosphate synthase subunit HisH of Cupriavidus pinatubonensis (strain JMP 134 / LMG 1197) (Cupriavidus necator (strain JMP 134)).